The following is a 214-amino-acid chain: External core antigen (214 aa).

The first 19 residues, 1 to 19 (MQLFHLCLIISCTCPTVQA), serve as a signal peptide directing secretion. The interval 25-27 (GWL) is HBEAG. Residues 165–214 (NAPILSTLPETTVVRRRDRGRSPRRRTPSPRRRRSPSPRRRRSQSRESQC) form a disordered region. Basic residues predominate over residues 178 to 207 (VRRRDRGRSPRRRTPSPRRRRSPSPRRRRS). The stretch at 186–192 (SPRRRTP) is one 1; half-length repeat. The segment at 186–208 (SPRRRTPSPRRRRSPSPRRRRSQ) is 3 X 8 AA repeats of S-P-R-R-R-R-S-[PQ]. Positions 186–214 (SPRRRTPSPRRRRSPSPRRRRSQSRESQC) are excised as a propeptide. 2 consecutive repeat copies span residues 193–200 (SPRRRRSP) and 201–208 (SPRRRRSQ).

Belongs to the orthohepadnavirus precore antigen family. As to quaternary structure, homodimerizes. Phosphorylated. In terms of processing, cleaved by host furin.

It is found in the secreted. The protein localises to the host nucleus. Functionally, may regulate immune response to the intracellular capsid in acting as a T-cell tolerogen, by having an immunoregulatory effect which prevents destruction of infected cells by cytotoxic T-cells. This immune regulation may predispose to chronicity during perinatal infections and prevent severe liver injury during adult infections. This is External core antigen from Hepatitis B virus genotype A2 subtype adw2 (strain Rutter 1979) (HBV-A).